The sequence spans 563 residues: Cytochrome P450 monooxygenase phqL (563 aa).

3 helical membrane-spanning segments follow: residues 20-40 (ENFS…IIIF), 52-72 (IPVG…FVPG), and 80-100 (ALWL…VSIL). A glycan (N-linked (GlcNAc...) asparagine) is linked at N279. Residues 362-382 (LVIFAGSGTVAVTIIGCLYFL) form a helical membrane-spanning segment. N419 carries N-linked (GlcNAc...) asparagine glycosylation. Residue C502 coordinates heme.

It belongs to the cytochrome P450 family. Heme serves as cofactor.

Its subcellular location is the membrane. The protein operates within alkaloid biosynthesis. Cytochrome P450 monooxygenase; part of the gene cluster that mediates the biosynthesis of paraherquamide, a fungal indole alkaloid that belongs to a family of natural products containing a characteristic bicyclo[2.2.2]diazaoctane core. The first steps in the biosynthesis of paraherquamide is the production of the beta-methyl-proline precursor from L-isoleucine. They require oxidation of a terminally hydroxylated L-isoleucine to the corresponding aldehyde by enzymes which have still to be identified. Spontaneous cyclization and dehydration would yield the 4-methyl pyrolline-5-carboxylic acid, which is then reduced by the pyrroline-5-carboxylate reductase phqD leading to the beta-methyl-proline precursor. The next step of paraherquamide biosynthesis involves coupling of beta-methyl-proline and L-tryptophan by the bimodular NRPS phqB, to produce a monooxopiperazine intermediate. The reductase (R) domain of phqB utilizes NADPH for hydride transfer to reduce the thioester bond of the T domain-tethered linear dipeptide to a hemithioaminal intermediate, which spontaneously cleaves the C-S bond to release the aldehyde product. This compound undergoes spontaneous cyclization and dehydration to give a dienamine which is reverse prenylated at C-2 by the reverse prenyltransferase phqJ. The other prenyltransferase present in the cluster, phqI may be a redundant gene in the pathway. During biosynthetic assembly, the key step to produce the polycyclic core is catalyzed by the bifunctional reductase and intramolecular [4+2] Diels-Alderase, phqE, resulting in formation of the [2.2.2] diazaoctane intermediate preparaherquamide. Following formation of preparaherquamide, an indole 2,3-epoxidation-initiated pinacol-like rearrangement is catalyzed by the phqK FAD-dependent monooxygenase. The prenyltransferase phqA, the cytochrome P450 monooxygenase phqL, and the FAD-linked oxidoreductase phqH (or the cytochrome P450 monooxygenase phqM), are proposed to be involved in the formation of the pyran ring. The FAD-dependent monooxygenase phqK is likely responsible for generation of the spiro-oxindole, and the N-methylation is likely mediated by the phqN methyltransferase leading to the isolable natural product paraherquamide F. However, the order of these biosynthetic steps has still to be determined. In late-stage paraherquamide biosynthesis, the third P450 monooxygenase, phqO, is probably responsible for the C-14 hydroxylation, transforming paraherquamide F to paraherquamide G, and paraherquamide E to the final product paraherquamide A. The expansion from the 6-membered ring pyran (in paraherquamides F and G) to the 7-membered dioxepin ring (in paraherquamides A and E) represents a poorly understood but intriguing process that probably involves the 2-oxoglutarate-dependent dioxygenase phqC. Finally, the remaining members of the paraherquamide cluster, including phqI as well as phqM (or phqH), do not have a clearly prescribed role and appear to be redundant. In Penicillium fellutanum, this protein is Cytochrome P450 monooxygenase phqL.